The chain runs to 542 residues: CTP synthase (542 aa).

Positions 1–265 (MARYVFITGG…DSEVLSAFGI (265 aa)) are amidoligase domain. Ser13 lines the CTP pocket. Residue Ser13 participates in UTP binding. 14–19 (SLGKGI) provides a ligand contact to ATP. Residue Tyr54 participates in L-glutamine binding. Asp71 provides a ligand contact to ATP. The Mg(2+) site is built by Asp71 and Glu139. CTP-binding positions include 146-148 (DIE), 186-191 (KTKPTQ), and Lys222. Residues 186–191 (KTKPTQ) and Lys222 contribute to the UTP site. Residues 291-541 (TIAVVGKYTG…IEAAIEQSRL (251 aa)) form the Glutamine amidotransferase type-1 domain. Gly353 provides a ligand contact to L-glutamine. The active-site Nucleophile; for glutamine hydrolysis is the Cys380. Residues 381–384 (FGMQ), Glu404, and Arg469 contribute to the L-glutamine site. Active-site residues include His514 and Glu516.

This sequence belongs to the CTP synthase family. Homotetramer.

It catalyses the reaction UTP + L-glutamine + ATP + H2O = CTP + L-glutamate + ADP + phosphate + 2 H(+). The catalysed reaction is L-glutamine + H2O = L-glutamate + NH4(+). The enzyme catalyses UTP + NH4(+) + ATP = CTP + ADP + phosphate + 2 H(+). Its pathway is pyrimidine metabolism; CTP biosynthesis via de novo pathway; CTP from UDP: step 2/2. With respect to regulation, allosterically activated by GTP, when glutamine is the substrate; GTP has no effect on the reaction when ammonia is the substrate. The allosteric effector GTP functions by stabilizing the protein conformation that binds the tetrahedral intermediate(s) formed during glutamine hydrolysis. Inhibited by the product CTP, via allosteric rather than competitive inhibition. Functionally, catalyzes the ATP-dependent amination of UTP to CTP with either L-glutamine or ammonia as the source of nitrogen. Regulates intracellular CTP levels through interactions with the four ribonucleotide triphosphates. The protein is CTP synthase of Brucella melitensis biotype 1 (strain ATCC 23456 / CCUG 17765 / NCTC 10094 / 16M).